A 512-amino-acid chain; its full sequence is Apolipoprotein N-acyltransferase (512 aa).

6 consecutive transmembrane segments (helical) span residues 5-25 (LDKY…FAAA), 56-76 (FAVS…FYWI), 92-112 (VPLT…CFWL), 118-138 (LPRG…TEFA), 168-188 (LGGI…LVLA), and 195-215 (SGKR…GYTA). The region spanning 233–477 (LQGNIDQTLK…ETVLEGHIKG (245 aa)) is the CN hydrolase domain. Glutamate 271 functions as the Proton acceptor in the catalytic mechanism. Lysine 337 is a catalytic residue. The Nucleophile role is filled by cysteine 389. Residues 487 to 507 (TGSSWWLMGILALAALILFIF) form a helical membrane-spanning segment.

This sequence belongs to the CN hydrolase family. Apolipoprotein N-acyltransferase subfamily.

It is found in the cell inner membrane. The catalysed reaction is N-terminal S-1,2-diacyl-sn-glyceryl-L-cysteinyl-[lipoprotein] + a glycerophospholipid = N-acyl-S-1,2-diacyl-sn-glyceryl-L-cysteinyl-[lipoprotein] + a 2-acyl-sn-glycero-3-phospholipid + H(+). Its pathway is protein modification; lipoprotein biosynthesis (N-acyl transfer). Catalyzes the phospholipid dependent N-acylation of the N-terminal cysteine of apolipoprotein, the last step in lipoprotein maturation. The sequence is that of Apolipoprotein N-acyltransferase from Neisseria meningitidis serogroup B (strain ATCC BAA-335 / MC58).